The primary structure comprises 168 residues: Probable deoxyuridine 5'-triphosphate nucleotidohydrolase (168 aa).

The protein belongs to the dCTP deaminase family. Archaeal dUTPase subfamily.

It catalyses the reaction dUTP + H2O = dUMP + diphosphate + H(+). The protein operates within pyrimidine metabolism; dUMP biosynthesis; dUMP from dCTP (dUTP route): step 2/2. Functionally, this enzyme is involved in nucleotide metabolism: it produces dUMP, the immediate precursor of thymidine nucleotides and it decreases the intracellular concentration of dUTP so that uracil cannot be incorporated into DNA. The chain is Probable deoxyuridine 5'-triphosphate nucleotidohydrolase from Archaeoglobus fulgidus (strain ATCC 49558 / DSM 4304 / JCM 9628 / NBRC 100126 / VC-16).